The chain runs to 186 residues: Potassium-transporting ATPase KdpC subunit (186 aa).

Residues 10-30 (LTIITMVLCGFLFPLAITLIG) traverse the membrane as a helical segment.

This sequence belongs to the KdpC family. As to quaternary structure, the system is composed of three essential subunits: KdpA, KdpB and KdpC.

It localises to the cell membrane. In terms of biological role, part of the high-affinity ATP-driven potassium transport (or Kdp) system, which catalyzes the hydrolysis of ATP coupled with the electrogenic transport of potassium into the cytoplasm. This subunit acts as a catalytic chaperone that increases the ATP-binding affinity of the ATP-hydrolyzing subunit KdpB by the formation of a transient KdpB/KdpC/ATP ternary complex. This Staphylococcus aureus (strain MSSA476) protein is Potassium-transporting ATPase KdpC subunit.